The following is a 123-amino-acid chain: Putative trans-acting factor (123 aa).

Disordered stretches follow at residues 1-38 (MEAV…KQLR) and 100-123 (VTHL…LGRP). The span at 13-25 (QVRSASRNQQRSG) shows a compositional bias: polar residues. Basic and acidic residues predominate over residues 26–38 (ESTKGRKWEKQLR). Over residues 106–115 (RNSQGRSQGT) the composition is skewed to polar residues.

The chain is Putative trans-acting factor (trans-acting factor) from Avian leukosis virus subgroup A (isolate RSA) (ALV-A RSA).